A 297-amino-acid polypeptide reads, in one-letter code: MDKQEAKHINMPSPSACEHKSVEAYLFIDPLCKDCWEIEPFIIKLWLEYGKYFSIRHIVTGKVDGTNASSHKWNKPANIRFVWEKTTSLQGFSCDGKVHMQEASSTPYLVSMAIKAAELQGRKAGSKFLRKLQEYIFLENVSNPDCELLLACAKDSNIDVEEFKKDLHSASAKKAFQCDLKFTNEMHITEIPSLVFFHANSDEEGIKIAGNYSYDVYVQLLKELVKCEIEPEPLPPLEVLLEATQFISSKEVAFIYDCPQQEIERELKKLQLKRKVQMIEVKCERYWKWIAKEKDLV.

The protein belongs to the SpxH family. In terms of assembly, interacts with Spx.

The protein resides in the cytoplasm. Functionally, adapter protein required for efficient degradation of Spx by ClpXP under non-stress conditions. Interaction with Spx stabilizes Spx and exposes the C-terminus of Spx for recognition and proteolysis by ClpXP. The polypeptide is ClpXP adapter protein SpxH (Bacillus cereus (strain ATCC 14579 / DSM 31 / CCUG 7414 / JCM 2152 / NBRC 15305 / NCIMB 9373 / NCTC 2599 / NRRL B-3711)).